The primary structure comprises 417 residues: Tyrosine--tRNA ligase (417 aa).

An L-tyrosine-binding site is contributed by tyrosine 35. The 'HIGH' region signature appears at 40-49; that stretch reads ATAGSLTVGH. Residues tyrosine 165 and glutamine 169 each coordinate L-tyrosine. Positions 229 to 233 match the 'KMSKS' region motif; it reads KFGKS. Residue lysine 232 participates in ATP binding. The 67-residue stretch at 350 to 416 folds into the S4 RNA-binding domain; that stretch reads ISLLEALVFT…GKRFNALIIF (67 aa).

The protein belongs to the class-I aminoacyl-tRNA synthetase family. TyrS type 1 subfamily. Homodimer.

The protein resides in the cytoplasm. The enzyme catalyses tRNA(Tyr) + L-tyrosine + ATP = L-tyrosyl-tRNA(Tyr) + AMP + diphosphate + H(+). Catalyzes the attachment of tyrosine to tRNA(Tyr) in a two-step reaction: tyrosine is first activated by ATP to form Tyr-AMP and then transferred to the acceptor end of tRNA(Tyr). The protein is Tyrosine--tRNA ligase of Phytoplasma mali (strain AT).